A 264-amino-acid polypeptide reads, in one-letter code: 3-methyl-2-oxobutanoate hydroxymethyltransferase (264 aa).

Positions 42 and 81 each coordinate Mg(2+). 3-methyl-2-oxobutanoate is bound by residues 42-43 (DS), Asp-81, and Lys-110. Glu-112 lines the Mg(2+) pocket. The Proton acceptor role is filled by Glu-179.

The protein belongs to the PanB family. In terms of assembly, homodecamer; pentamer of dimers. The cofactor is Mg(2+).

Its subcellular location is the cytoplasm. The enzyme catalyses 3-methyl-2-oxobutanoate + (6R)-5,10-methylene-5,6,7,8-tetrahydrofolate + H2O = 2-dehydropantoate + (6S)-5,6,7,8-tetrahydrofolate. It participates in cofactor biosynthesis; (R)-pantothenate biosynthesis; (R)-pantoate from 3-methyl-2-oxobutanoate: step 1/2. Its function is as follows. Catalyzes the reversible reaction in which hydroxymethyl group from 5,10-methylenetetrahydrofolate is transferred onto alpha-ketoisovalerate to form ketopantoate. This is 3-methyl-2-oxobutanoate hydroxymethyltransferase from Francisella tularensis subsp. tularensis (strain FSC 198).